The primary structure comprises 169 residues: Co-chaperone protein HscB homolog (169 aa).

The region spanning 2-74 (NYFDLFSLPV…CLRAQYLLLL (73 aa)) is the J domain.

This sequence belongs to the HscB family. As to quaternary structure, interacts with HscA and stimulates its ATPase activity.

In terms of biological role, co-chaperone involved in the maturation of iron-sulfur cluster-containing proteins. Seems to help targeting proteins to be folded toward HscA. The protein is Co-chaperone protein HscB homolog of Psychromonas ingrahamii (strain DSM 17664 / CCUG 51855 / 37).